We begin with the raw amino-acid sequence, 209 residues long: Large ribosomal subunit protein uL3 (209 aa).

Polar residues predominate over residues 112–122 (GTTRGHGTQGN). The disordered stretch occupies residues 112–146 (GTTRGHGTQGNIKRWGQSRGPETHGSRYHRIPGSM).

Belongs to the universal ribosomal protein uL3 family. In terms of assembly, part of the 50S ribosomal subunit. Forms a cluster with proteins L14 and L19.

In terms of biological role, one of the primary rRNA binding proteins, it binds directly near the 3'-end of the 23S rRNA, where it nucleates assembly of the 50S subunit. This Lactobacillus gasseri (strain ATCC 33323 / DSM 20243 / BCRC 14619 / CIP 102991 / JCM 1131 / KCTC 3163 / NCIMB 11718 / NCTC 13722 / AM63) protein is Large ribosomal subunit protein uL3.